A 235-amino-acid polypeptide reads, in one-letter code: Leucyl/phenylalanyl-tRNA--protein transferase (235 aa).

Belongs to the L/F-transferase family.

It localises to the cytoplasm. It carries out the reaction N-terminal L-lysyl-[protein] + L-leucyl-tRNA(Leu) = N-terminal L-leucyl-L-lysyl-[protein] + tRNA(Leu) + H(+). The catalysed reaction is N-terminal L-arginyl-[protein] + L-leucyl-tRNA(Leu) = N-terminal L-leucyl-L-arginyl-[protein] + tRNA(Leu) + H(+). It catalyses the reaction L-phenylalanyl-tRNA(Phe) + an N-terminal L-alpha-aminoacyl-[protein] = an N-terminal L-phenylalanyl-L-alpha-aminoacyl-[protein] + tRNA(Phe). In terms of biological role, functions in the N-end rule pathway of protein degradation where it conjugates Leu, Phe and, less efficiently, Met from aminoacyl-tRNAs to the N-termini of proteins containing an N-terminal arginine or lysine. This Anaeromyxobacter sp. (strain Fw109-5) protein is Leucyl/phenylalanyl-tRNA--protein transferase.